The chain runs to 212 residues: Golgi SNAP receptor complex member 2 (212 aa).

M1 carries the N-acetylmethionine modification. Residues 1–190 (MDPLFQQTHK…LIEKRAFQDK (190 aa)) are Cytoplasmic-facing. The stretch at 61–107 (NKRQNARLRVDQLKYDVQHLQTALRNFQHRRHAREQQERQREELLSR) forms a coiled coil. Residues 118-120 (IPM) carry the IxM motif; signal for cargo packaging into COPII-coated vesicles motif. A helical; Anchor for type IV membrane protein transmembrane segment spans residues 191 to 211 (YFMIGGMLLTCVVMFLVVQYL). Position 212 (T212) is a topological domain, vesicular.

The protein belongs to the GOSR2 family. In terms of assembly, part of a unique SNARE complex composed of the Golgi SNAREs GOSR1, STX5 and YKT6. Interacts (via IxM motif) with SEC24C and SEC24D; mediates GOSR2 packaging into COPII-coated vesicles. Interacts with BET1.

It localises to the golgi apparatus. It is found in the cis-Golgi network membrane. The protein localises to the golgi apparatus membrane. Its subcellular location is the endoplasmic reticulum membrane. Involved in transport of proteins from the cis/medial-Golgi to the trans-Golgi network. This is Golgi SNAP receptor complex member 2 (GOSR2) from Homo sapiens (Human).